Consider the following 280-residue polypeptide: Putative pyruvate, phosphate dikinase regulatory protein (280 aa).

Residue 154–161 (GVSRTSKT) coordinates ADP.

The protein belongs to the pyruvate, phosphate/water dikinase regulatory protein family. PDRP subfamily.

It catalyses the reaction N(tele)-phospho-L-histidyl/L-threonyl-[pyruvate, phosphate dikinase] + ADP = N(tele)-phospho-L-histidyl/O-phospho-L-threonyl-[pyruvate, phosphate dikinase] + AMP + H(+). The catalysed reaction is N(tele)-phospho-L-histidyl/O-phospho-L-threonyl-[pyruvate, phosphate dikinase] + phosphate + H(+) = N(tele)-phospho-L-histidyl/L-threonyl-[pyruvate, phosphate dikinase] + diphosphate. Its function is as follows. Bifunctional serine/threonine kinase and phosphorylase involved in the regulation of the pyruvate, phosphate dikinase (PPDK) by catalyzing its phosphorylation/dephosphorylation. In Nitrobacter hamburgensis (strain DSM 10229 / NCIMB 13809 / X14), this protein is Putative pyruvate, phosphate dikinase regulatory protein.